The sequence spans 965 residues: Transmembrane channel-like protein 5 (965 aa).

2 stretches are compositionally biased toward polar residues: residues 1 to 10 (MSSFHKNSSY) and 20 to 31 (SGSQNHTQNYLR). The disordered stretch occupies residues 1–235 (MSSFHKNSSY…GAEEGDVYSP (235 aa)). The Extracellular portion of the chain corresponds to 1-417 (MSSFHKNSSY…YFSFLRWLLK (417 aa)). Positions 61–70 (TNPDYHHSLA) are enriched in basic and acidic residues. A compositionally biased stretch (polar residues) spans 166-181 (QGNSYHSGPRSHSNLP). Serine 248 is subject to Phosphoserine. A helical transmembrane segment spans residues 418 to 438 (FNIFSFVMNFSFIIIPQFTVG). Topologically, residues 439-444 (EKNTLQ) are cytoplasmic. A helical transmembrane segment spans residues 445–467 (FTGLEFFTGAGYFRETVMYYGFY). Over 468 to 484 (TNSTIRHRMGGASYNMQ) the chain is Extracellular. A helical membrane pass occupies residues 485–505 (LAYIFTIGACLVICFFSLLFS). Residues 506 to 578 (MAKYFRNNFI…NQKLTRFSVH (73 aa)) lie on the Cytoplasmic side of the membrane. Residues 579–599 (VAAWLVSTGITAACCVAVYYL) form a helical membrane-spanning segment. Residues 600 to 613 (AEYNSEFLKTHKNP) are Extracellular-facing. A helical membrane pass occupies residues 614–634 (GAVLLLPFVVSCINLAVPRFY). Residues 635–657 (SMFRLVERYEIPRQEVYVLLIRN) lie on the Cytoplasmic side of the membrane. Residues 658–678 (IFLKISIVGILCYYWLNIVAL) traverse the membrane as a helical segment. The Extracellular portion of the chain corresponds to 679–691 (SGEECWETLIGQD). A helical membrane pass occupies residues 692 to 712 (IYRLLLMDFVFSLADSLLGEF). Residues 713–747 (LRRLIGMKFITSLSLQEFDIARNVLELIYAQTLAW) are Cytoplasmic-facing. Residues 748-768 (LGIFFCPLLPFIQMITLFIMF) form a helical membrane-spanning segment. Topologically, residues 769 to 794 (YVKNVSLMMNFQPPSKAWRASQMITF) are extracellular. Residues 795–815 (FIFLLFFPSFTGVLCTLAITI) form a helical membrane-spanning segment. The Cytoplasmic portion of the chain corresponds to 816–859 (WRLKPSADCGPFRGLPSFIQSIYSWIDTLSHRPGYLWVVWIYQN). The chain crosses the membrane as a helical span at residues 860–880 (LIGSVHFFFILTLIVLIITYL). Residues 881 to 965 (YWQITEGRKV…RSMQEENAIA (85 aa)) lie on the Extracellular side of the membrane.

Belongs to the TMC family.

The protein resides in the membrane. Its function is as follows. Probable component of an ion channel. Molecular function hasn't been characterized yet. This is Transmembrane channel-like protein 5 from Rattus norvegicus (Rat).